We begin with the raw amino-acid sequence, 106 residues long: Small ribosomal subunit protein bS6 (106 aa).

Belongs to the bacterial ribosomal protein bS6 family.

Its function is as follows. Binds together with bS18 to 16S ribosomal RNA. The sequence is that of Small ribosomal subunit protein bS6 from Cyanothece sp. (strain PCC 7425 / ATCC 29141).